The sequence spans 273 residues: Dermonecrotic toxin LspaSicTox-alphaIA2i (273 aa).

Residue H5 is part of the active site. Residues E25 and D27 each coordinate Mg(2+). The Nucleophile role is filled by H41. 2 disulfides stabilise this stretch: C45–C51 and C47–C190. D85 lines the Mg(2+) pocket.

Belongs to the arthropod phospholipase D family. Class II subfamily. The cofactor is Mg(2+). As to expression, expressed by the venom gland.

It is found in the secreted. It carries out the reaction an N-(acyl)-sphingosylphosphocholine = an N-(acyl)-sphingosyl-1,3-cyclic phosphate + choline. The catalysed reaction is an N-(acyl)-sphingosylphosphoethanolamine = an N-(acyl)-sphingosyl-1,3-cyclic phosphate + ethanolamine. It catalyses the reaction a 1-acyl-sn-glycero-3-phosphocholine = a 1-acyl-sn-glycero-2,3-cyclic phosphate + choline. The enzyme catalyses a 1-acyl-sn-glycero-3-phosphoethanolamine = a 1-acyl-sn-glycero-2,3-cyclic phosphate + ethanolamine. In terms of biological role, dermonecrotic toxins cleave the phosphodiester linkage between the phosphate and headgroup of certain phospholipids (sphingolipid and lysolipid substrates), forming an alcohol (often choline) and a cyclic phosphate. This toxin acts on sphingomyelin (SM). It may also act on ceramide phosphoethanolamine (CPE), lysophosphatidylcholine (LPC) and lysophosphatidylethanolamine (LPE), but not on lysophosphatidylserine (LPS), and lysophosphatidylglycerol (LPG). It acts by transphosphatidylation, releasing exclusively cyclic phosphate products as second products. Induces dermonecrosis, hemolysis, increased vascular permeability, edema, inflammatory response, and platelet aggregation. The chain is Dermonecrotic toxin LspaSicTox-alphaIA2i from Loxosceles spadicea (Recluse spider).